A 135-amino-acid polypeptide reads, in one-letter code: Large ribosomal subunit protein bL21 (135 aa).

The tract at residues 85-135 (YRVKRGHRQQYTQIEIESLNANGPASSDDEEAAETSDAEPDEDPEAEPAEA) is disordered. Over residues 93–107 (QQYTQIEIESLNANG) the composition is skewed to polar residues. Positions 111–135 (SDDEEAAETSDAEPDEDPEAEPAEA) are enriched in acidic residues.

The protein belongs to the bacterial ribosomal protein bL21 family. Part of the 50S ribosomal subunit. Contacts protein L20.

This protein binds to 23S rRNA in the presence of protein L20. The sequence is that of Large ribosomal subunit protein bL21 from Salinibacter ruber (strain DSM 13855 / M31).